The chain runs to 623 residues: Membrane protein insertase YidC (623 aa).

A run of 5 helical transmembrane segments spans residues Leu8 to Pro28, Met379 to Tyr399, Leu449 to Ile469, Thr507 to Leu527, and Ile543 to Val563. Low complexity predominate over residues Lys601–Pro617. The tract at residues Lys601 to Pro623 is disordered.

Belongs to the OXA1/ALB3/YidC family. Type 1 subfamily. As to quaternary structure, interacts with the Sec translocase complex via SecD. Specifically interacts with transmembrane segments of nascent integral membrane proteins during membrane integration.

The protein localises to the cell inner membrane. Required for the insertion and/or proper folding and/or complex formation of integral membrane proteins into the membrane. Involved in integration of membrane proteins that insert both dependently and independently of the Sec translocase complex, as well as at least some lipoproteins. Aids folding of multispanning membrane proteins. The sequence is that of Membrane protein insertase YidC from Cereibacter sphaeroides (strain ATCC 17029 / ATH 2.4.9) (Rhodobacter sphaeroides).